A 214-amino-acid chain; its full sequence is Thymidylate kinase (214 aa).

Position 7-14 (7-14) interacts with ATP; it reads GIEGAGKT.

It belongs to the thymidylate kinase family.

It catalyses the reaction dTMP + ATP = dTDP + ADP. Functionally, phosphorylation of dTMP to form dTDP in both de novo and salvage pathways of dTTP synthesis. The polypeptide is Thymidylate kinase (Desulfosudis oleivorans (strain DSM 6200 / JCM 39069 / Hxd3) (Desulfococcus oleovorans)).